An 82-amino-acid polypeptide reads, in one-letter code: Large ribosomal subunit protein uL23 (82 aa).

Belongs to the universal ribosomal protein uL23 family. In terms of assembly, part of the 50S ribosomal subunit. Contacts protein L29.

Its function is as follows. Binds to 23S rRNA. One of the proteins that surrounds the polypeptide exit tunnel on the outside of the ribosome. The polypeptide is Large ribosomal subunit protein uL23 (Methanosarcina acetivorans (strain ATCC 35395 / DSM 2834 / JCM 12185 / C2A)).